The following is a 331-amino-acid chain: Ketol-acid reductoisomerase (NADP(+)) (331 aa).

The KARI N-terminal Rossmann domain maps to Thr-2–Thr-181. NADP(+) contacts are provided by residues Tyr-25–Gln-28, Arg-48, Ser-52, and Asp-82–Gln-85. His-107 is a catalytic residue. Position 133 (Gly-133) interacts with NADP(+). The KARI C-terminal knotted domain occupies Thr-182–Val-327. Mg(2+) is bound by residues Asp-190, Glu-194, Glu-226, and Glu-230. Residue Ser-251 participates in substrate binding.

The protein belongs to the ketol-acid reductoisomerase family. Requires Mg(2+) as cofactor.

The catalysed reaction is (2R)-2,3-dihydroxy-3-methylbutanoate + NADP(+) = (2S)-2-acetolactate + NADPH + H(+). The enzyme catalyses (2R,3R)-2,3-dihydroxy-3-methylpentanoate + NADP(+) = (S)-2-ethyl-2-hydroxy-3-oxobutanoate + NADPH + H(+). It participates in amino-acid biosynthesis; L-isoleucine biosynthesis; L-isoleucine from 2-oxobutanoate: step 2/4. It functions in the pathway amino-acid biosynthesis; L-valine biosynthesis; L-valine from pyruvate: step 2/4. Functionally, involved in the biosynthesis of branched-chain amino acids (BCAA). Catalyzes an alkyl-migration followed by a ketol-acid reduction of (S)-2-acetolactate (S2AL) to yield (R)-2,3-dihydroxy-isovalerate. In the isomerase reaction, S2AL is rearranged via a Mg-dependent methyl migration to produce 3-hydroxy-3-methyl-2-ketobutyrate (HMKB). In the reductase reaction, this 2-ketoacid undergoes a metal-dependent reduction by NADPH to yield (R)-2,3-dihydroxy-isovalerate. This Listeria innocua serovar 6a (strain ATCC BAA-680 / CLIP 11262) protein is Ketol-acid reductoisomerase (NADP(+)).